A 363-amino-acid chain; its full sequence is Succinyl-diaminopimelate desuccinylase (363 aa).

Position 63 (H63) interacts with Zn(2+). Residue D65 is part of the active site. Position 94 (D94) interacts with Zn(2+). The active-site Proton acceptor is E123. Zn(2+)-binding residues include E124, E152, and H337.

The protein belongs to the peptidase M20A family. DapE subfamily. In terms of assembly, homodimer. Zn(2+) serves as cofactor. Co(2+) is required as a cofactor.

The catalysed reaction is N-succinyl-(2S,6S)-2,6-diaminopimelate + H2O = (2S,6S)-2,6-diaminopimelate + succinate. The protein operates within amino-acid biosynthesis; L-lysine biosynthesis via DAP pathway; LL-2,6-diaminopimelate from (S)-tetrahydrodipicolinate (succinylase route): step 3/3. Catalyzes the hydrolysis of N-succinyl-L,L-diaminopimelic acid (SDAP), forming succinate and LL-2,6-diaminopimelate (DAP), an intermediate involved in the bacterial biosynthesis of lysine and meso-diaminopimelic acid, an essential component of bacterial cell walls. The protein is Succinyl-diaminopimelate desuccinylase of Campylobacter concisus (strain 13826).